The chain runs to 891 residues: DNA mismatch repair protein MutS (891 aa).

646-653 (GPNMAGKS) provides a ligand contact to ATP.

Belongs to the DNA mismatch repair MutS family.

Its function is as follows. This protein is involved in the repair of mismatches in DNA. It is possible that it carries out the mismatch recognition step. This protein has a weak ATPase activity. The polypeptide is DNA mismatch repair protein MutS (Rickettsia canadensis (strain McKiel)).